Here is a 258-residue protein sequence, read N- to C-terminus: Transcriptional repressor AccR (258 aa).

In terms of domain architecture, HTH deoR-type spans 6-61 (TQDRQAKIVELLRDEQFLAIGRLTEHFQISVATARRDLSELHEAGLLRRTHGGAVS). A DNA-binding region (H-T-H motif) is located at residues 23-42 (LAIGRLTEHFQISVATARRD).

In terms of biological role, represses opine catabolism and conjugal transfer of the nopaline Ti plasmid pTiC58. The protein is Transcriptional repressor AccR (accR) of Agrobacterium fabrum (strain C58 / ATCC 33970) (Agrobacterium tumefaciens (strain C58)).